Consider the following 210-residue polypeptide: Na(+)-translocating NADH-quinone reductase subunit D (210 aa).

Transmembrane regions (helical) follow at residues 14–34, 42–62, 72–92, 96–116, 131–151, and 178–198; these read PIIN…ALAV, LVMS…ISLI, IIVQ…VLQA, EIAK…IVMG, FMDG…VGFF, and NGLL…IWVI.

The protein belongs to the NqrDE/RnfAE family. In terms of assembly, composed of six subunits; NqrA, NqrB, NqrC, NqrD, NqrE and NqrF.

It localises to the cell inner membrane. The catalysed reaction is a ubiquinone + n Na(+)(in) + NADH + H(+) = a ubiquinol + n Na(+)(out) + NAD(+). In terms of biological role, NQR complex catalyzes the reduction of ubiquinone-1 to ubiquinol by two successive reactions, coupled with the transport of Na(+) ions from the cytoplasm to the periplasm. NqrA to NqrE are probably involved in the second step, the conversion of ubisemiquinone to ubiquinol. This is Na(+)-translocating NADH-quinone reductase subunit D from Shewanella denitrificans (strain OS217 / ATCC BAA-1090 / DSM 15013).